A 419-amino-acid polypeptide reads, in one-letter code: Serine hydroxymethyltransferase (419 aa).

Residues Leu-122 and 126–128 (GHL) contribute to the (6S)-5,6,7,8-tetrahydrofolate site. Lys-231 carries the N6-(pyridoxal phosphate)lysine modification. 354–356 (SPF) contributes to the (6S)-5,6,7,8-tetrahydrofolate binding site.

The protein belongs to the SHMT family. As to quaternary structure, homodimer. Requires pyridoxal 5'-phosphate as cofactor.

It localises to the cytoplasm. The catalysed reaction is (6R)-5,10-methylene-5,6,7,8-tetrahydrofolate + glycine + H2O = (6S)-5,6,7,8-tetrahydrofolate + L-serine. It participates in one-carbon metabolism; tetrahydrofolate interconversion. Its pathway is amino-acid biosynthesis; glycine biosynthesis; glycine from L-serine: step 1/1. Its function is as follows. Catalyzes the reversible interconversion of serine and glycine with tetrahydrofolate (THF) serving as the one-carbon carrier. This reaction serves as the major source of one-carbon groups required for the biosynthesis of purines, thymidylate, methionine, and other important biomolecules. Also exhibits THF-independent aldolase activity toward beta-hydroxyamino acids, producing glycine and aldehydes, via a retro-aldol mechanism. The polypeptide is Serine hydroxymethyltransferase (Exiguobacterium sibiricum (strain DSM 17290 / CCUG 55495 / CIP 109462 / JCM 13490 / 255-15)).